Here is a 443-residue protein sequence, read N- to C-terminus: ATP-dependent protease ATPase subunit HslU (443 aa).

ATP contacts are provided by residues Ile-18, 60-65, Asp-256, Glu-321, and Arg-393; that span reads GVGKTE.

Belongs to the ClpX chaperone family. HslU subfamily. A double ring-shaped homohexamer of HslV is capped on each side by a ring-shaped HslU homohexamer. The assembly of the HslU/HslV complex is dependent on binding of ATP.

It is found in the cytoplasm. ATPase subunit of a proteasome-like degradation complex; this subunit has chaperone activity. The binding of ATP and its subsequent hydrolysis by HslU are essential for unfolding of protein substrates subsequently hydrolyzed by HslV. HslU recognizes the N-terminal part of its protein substrates and unfolds these before they are guided to HslV for hydrolysis. The chain is ATP-dependent protease ATPase subunit HslU from Tolumonas auensis (strain DSM 9187 / NBRC 110442 / TA 4).